Here is an 89-residue protein sequence, read N- to C-terminus: HssA/B-like protein 14 (89 aa).

Belongs to the hssA/B family.

This is HssA/B-like protein 14 (hssl14) from Dictyostelium discoideum (Social amoeba).